Consider the following 129-residue polypeptide: Flagellar assembly factor FliW (129 aa).

The protein belongs to the FliW family. Interacts with flagellins FlaA and FlaB but not with FlaC; recognizes glycosylated and non-glycosylated FlaA equally. Interacts with CsrA. May form a 3-way complex of flagellin, FliS and FliW simultaneously in which FliS and FliW do not directly interact.

It is found in the cytoplasm. Acts as an anti-CsrA protein, binds CsrA and prevents it from repressing translation of its target genes, one of which is flagellin. Binds to flagellin and participates in the assembly of the flagellum. Its function is as follows. Overexpression leads to increased levels of FlaA and FlaB, but levels of FlaC remain stable. Involved in post-transcriptional regulation of flagellin biosynthesis. This Campylobacter jejuni subsp. jejuni serotype O:6 (strain 81116 / NCTC 11828) protein is Flagellar assembly factor FliW.